A 416-amino-acid polypeptide reads, in one-letter code: Gamma-glutamyl phosphate reductase (416 aa).

It belongs to the gamma-glutamyl phosphate reductase family.

The protein resides in the cytoplasm. The catalysed reaction is L-glutamate 5-semialdehyde + phosphate + NADP(+) = L-glutamyl 5-phosphate + NADPH + H(+). It participates in amino-acid biosynthesis; L-proline biosynthesis; L-glutamate 5-semialdehyde from L-glutamate: step 2/2. Functionally, catalyzes the NADPH-dependent reduction of L-glutamate 5-phosphate into L-glutamate 5-semialdehyde and phosphate. The product spontaneously undergoes cyclization to form 1-pyrroline-5-carboxylate. The sequence is that of Gamma-glutamyl phosphate reductase from Streptococcus thermophilus (strain CNRZ 1066).